A 658-amino-acid chain; its full sequence is Glycogen debranching enzyme (658 aa).

The active-site Nucleophile is Asp336. The Proton donor role is filled by Glu371. The segment at 459 to 484 (EANGEENRDGTNSNYSDNHGKEGLGG) is disordered.

The protein belongs to the glycosyl hydrolase 13 family.

It carries out the reaction Hydrolysis of (1-&gt;6)-alpha-D-glucosidic linkages to branches with degrees of polymerization of three or four glucose residues in limit dextrin.. It participates in glycan degradation; glycogen degradation. Removes maltotriose and maltotetraose chains that are attached by 1,6-alpha-linkage to the limit dextrin main chain, generating a debranched limit dextrin. This Salmonella choleraesuis (strain SC-B67) protein is Glycogen debranching enzyme.